A 1032-amino-acid polypeptide reads, in one-letter code: Exo-beta-D-glucosaminidase (1032 aa).

A signal peptide spans 1-32; the sequence is MSFRQKRTRIPLLAMTVTALAAAVCGVTTAPA. Positions 33–46 are excised as a propeptide; the sequence is ATGAEVAVPLSVGA. The active-site Proton donor is D469. Catalysis depends on E541, which acts as the Nucleophile. Positions 883–908 are disordered; it reads SVRISGWNTGTQTVPADGSGPGPSDP. A CBM6 domain is found at 909–1032; the sequence is VDYQAEDATI…GGPNVDKITL (124 aa).

This sequence belongs to the glycosyl hydrolase 2 family. In terms of assembly, monomer.

It localises to the secreted. It catalyses the reaction Hydrolysis of chitosan or chitosan oligosaccharides to remove successive D-glucosamine residues from the non-reducing termini.. Functionally, hydrolyzes chitosan and chitooligosaccharides with retention of anomeric configuration. Has maximum activity on chitotetraose, chitopentaose and their corresponding alcohols, with a slight decrease in the rate of hydrolysis on longer chains. Has no activity against beta-D-glucopyranoside, beta-D-xylopyranoside, beta-D-mannoside, beta-D-glucuronide, beta-D-galactoside, beta-D-N-acetylgalactosamide, beta-D-N-acetylglucosaminide and alpha-D-N-acetylglucosaminide. The polypeptide is Exo-beta-D-glucosaminidase (Amycolatopsis orientalis (Nocardia orientalis)).